A 94-amino-acid polypeptide reads, in one-letter code: Phosphoribosyl-ATP pyrophosphatase (94 aa).

This sequence belongs to the PRA-PH family.

Its subcellular location is the cytoplasm. It carries out the reaction 1-(5-phospho-beta-D-ribosyl)-ATP + H2O = 1-(5-phospho-beta-D-ribosyl)-5'-AMP + diphosphate + H(+). Its pathway is amino-acid biosynthesis; L-histidine biosynthesis; L-histidine from 5-phospho-alpha-D-ribose 1-diphosphate: step 2/9. The protein is Phosphoribosyl-ATP pyrophosphatase of Saccharolobus islandicus (strain Y.N.15.51 / Yellowstone #2) (Sulfolobus islandicus).